We begin with the raw amino-acid sequence, 238 residues long: Ribonuclease PH (238 aa).

Phosphate-binding positions include arginine 86 and 124-126 (GTR).

It belongs to the RNase PH family. As to quaternary structure, homohexameric ring arranged as a trimer of dimers.

The enzyme catalyses tRNA(n+1) + phosphate = tRNA(n) + a ribonucleoside 5'-diphosphate. In terms of biological role, phosphorolytic 3'-5' exoribonuclease that plays an important role in tRNA 3'-end maturation. Removes nucleotide residues following the 3'-CCA terminus of tRNAs; can also add nucleotides to the ends of RNA molecules by using nucleoside diphosphates as substrates, but this may not be physiologically important. Probably plays a role in initiation of 16S rRNA degradation (leading to ribosome degradation) during starvation. This is Ribonuclease PH from Brucella melitensis biotype 2 (strain ATCC 23457).